The chain runs to 53 residues: Large ribosomal subunit protein bL33A (53 aa).

It belongs to the bacterial ribosomal protein bL33 family.

The chain is Large ribosomal subunit protein bL33A (rpmG1) from Mycoplasma pneumoniae (strain ATCC 29342 / M129 / Subtype 1) (Mycoplasmoides pneumoniae).